A 319-amino-acid polypeptide reads, in one-letter code: Ornithine carbamoyltransferase (319 aa).

Carbamoyl phosphate contacts are provided by residues 55–58, glutamine 82, arginine 106, and 133–136; these read STRT and HPCQ. L-ornithine-binding positions include asparagine 171, aspartate 234, and 238–239; that span reads SM. Carbamoyl phosphate is bound by residues 274 to 275 and arginine 302; that span reads CL.

This sequence belongs to the aspartate/ornithine carbamoyltransferase superfamily. OTCase family.

Its subcellular location is the cytoplasm. The catalysed reaction is carbamoyl phosphate + L-ornithine = L-citrulline + phosphate + H(+). It participates in amino-acid biosynthesis; L-arginine biosynthesis; L-arginine from L-ornithine and carbamoyl phosphate: step 1/3. Reversibly catalyzes the transfer of the carbamoyl group from carbamoyl phosphate (CP) to the N(epsilon) atom of ornithine (ORN) to produce L-citrulline. The sequence is that of Ornithine carbamoyltransferase from Corynebacterium diphtheriae (strain ATCC 700971 / NCTC 13129 / Biotype gravis).